The sequence spans 285 residues: Extracellular metalloprotease SMAC_06893 (285 aa).

Residues 1 to 18 (MQIKSLLLAAAAAPAALG) form the signal peptide. His-197 provides a ligand contact to Zn(2+). Glu-198 is a catalytic residue. His-201 is a binding site for Zn(2+). Residues Cys-233 and Cys-260 are joined by a disulfide bond. Residue Asn-282 is glycosylated (N-linked (GlcNAc...) asparagine).

The protein belongs to the peptidase M43B family.

The protein localises to the secreted. Secreted metalloproteinase that allows assimilation of proteinaceous substrates. This Sordaria macrospora (strain ATCC MYA-333 / DSM 997 / K(L3346) / K-hell) protein is Extracellular metalloprotease SMAC_06893.